We begin with the raw amino-acid sequence, 1921 residues long: MEPQRRELLAQCQQSLAQAMTEVEAVLGLLEAAGALSPGERRQLDEEAGGAKAELLLQLLLAKEQDHFQDLRAALEKTQPHLLPILYLNGVVGPPQSTEGAGSTYSVLSIMPSDSESSSSLSSVGTTGKAPSPPPLLTEQQANDTVENLSIQLRLMTRERNELRKRLAFATHGATFDKRPYHRLNPDYERLKIQCVRAMSDLQSLQNQHTNALKRCEEVAKETDFYHTLHSRLLSDQTQLKDDVDMLRRENGKLRRERNLLQQSWEDMKRLREEDQKEIGDLRAQQQQVLKHNGSSEILNKLYDTAMDKLEVVKKDYDALRKRYSEKVAMHNSDLSRLEQLGEENQRLQKQTEMLTQQRDTAIQLQHQCALSLRRFETIHHELSKATAQNKDLQWEMELLQSELTELRSKQVKTAKESEKYKEERDAVYSEYKLIMSERDQVISELDKLQTEVELAESKLKSSTSEKKAASEEMEALRQIKDTVTMDAGRANKEVEILRKQCKALCQELKEALQEADVAKCRRDWAFQERDKIVAERDSIRTLCDNLRRERDRAVSELAEALRSLDDTRKQKNDVSRELKELKEQMECQLEKEARFRQLMAHSSHDSAIDTDSMEWETEVVEFERETEDIDLKALGFDMAEGVNEPCFPGDCGIFVTKVDKGSIADGRLRVNDWLLRINDVDLINKDKKQAIKALLNGEGAINMVVRRRKSLGGKVVTPLHINLSGQKDSGISLENGVYAAAVVPGSPAAKEGSLAVGDRIVAINGIALDNKSLNECESLLRSCQDSLTLSLLKVFPQSSSWSGQNIFENIKDSDRMLSCRAHGPEVQAHNKRNLLQHNNSTQTDIFYTDRLEDRKELGHSGGSSSFLHKPFSGSSSPVSPQACPSTSERSLNSFRSDTSAERGYGLVDMRSQRPLLSFETEVGPCGAVEVPLDKIDPEGSNSGGTWPKAVLGSTSGPEKLSVYKKPKQRKSIFDPNTFKRPQTPPKIDYLLPGPGLTHSPQPSKRVGSLTPPKPPRRSDSIKFQHRLETSSESEATLVGSSPSTSPPSAPPPSMDPSEPTHASPPRKARVRIASSYHSEGDGDTSYLPAKKPCDEDLTSQKVDELGQKRRRPKSAPSFRPKISPVVIPAQCLEEQECVPAIGELSPEGQEWSPYSPGHASRHGNPLLYPNRPSVGTVPRSMTPGTTVGSILRNPIYTVRSHRVLPCGSPPVPRDAGSQSLSPSVQHQGRLSLDLSHRACSDYSEMRASQGSNSLPSSARLGSSSNLQFKAERIKIPLTPRYPRSVMGSDRGSLSHSECSTPPRSPLNIDTLSSCSQPQTTASTLPRIAVNPSSHGERRKDRPFVEEPRHVKVQKGSEPLGISIVSGEKGGVYVSKVTLGSIAHQAGLEYGDQLLEFNGINLRSATEQQARLIIGQQCDTITILAQYNPHIHQLNSHSRSSSHLDPAATPHSTLQGSSAGTPEHPSVIDPLMEQDEGPGTPPAKQSASSTRSVGDTTKKTPDPRIVFIKKSQLDLGVHLCGGNLHGVFVAEVEDDSPAKGPDGLVPGDLILEYGSLDMRSRTVEDVYVEMLKPKDSLRLKVQYRHEEFTRVKGLPGDSFYIRALYDRLAEVEPELSFKKDDILYVDDTLPQGVFGSWMAWQLDENAQKIQRGQIPSKYVMDQEFSRRLSMSEVKDDNTAKTLSAAARRSFFRRKHKHKRSGSKDGKDLLALDTFSNDSIPLFEDSVSLAYQRVQKVDCTSLRPVLLLGPLLDVVKEMLVNEAPGKFCRCPLEVMKASQQAIERGVKDCLFVDYKRRSGHFDVTTVASIKEITEKNRHCLLDIAPHAIERLHHMHIYPIVIFIRYKSAKHIKEQRDPVYLRDKVTQRHSKEQFETAQKIDQEYSRYFTGVVQGGALSSICTQILAMVSQEQSKVLWIPACPP.

Residues 1–90 (MEPQRRELLA…HLLPILYLNG (90 aa)) enclose the CARD domain. The interval 116 to 143 (ESSSSLSSVGTTGKAPSPPPLLTEQQAN) is disordered. A coiled-coil region spans residues 139 to 601 (EQQANDTVEN…KEARFRQLMA (463 aa)). Phosphoserine occurs at positions 264 and 295. 2 PDZ domains span residues 620-710 (VVEF…RRRK) and 705-796 (VVRR…LKVF). Residues 857–898 (ELGHSGGSSSFLHKPFSGSSSPVSPQACPSTSERSLNSFRSD) form a disordered region. Polar residues predominate over residues 873–898 (SGSSSPVSPQACPSTSERSLNSFRSD). Position 900 is a phosphoserine (Ser900). The segment at 930 to 1121 (EVPLDKIDPE…RPKSAPSFRP (192 aa)) is disordered. Thr984 bears the Phosphothreonine mark. Ser1000 carries the post-translational modification Phosphoserine. Thr1011 is modified (phosphothreonine). Basic and acidic residues predominate over residues 1017–1030 (RRSDSIKFQHRLET). A Phosphoserine modification is found at Ser1021. Over residues 1045-1055 (TSPPSAPPPSM) the composition is skewed to pro residues. The residue at position 1183 (Thr1183) is a Phosphothreonine. 3 disordered regions span residues 1204 to 1227 (VLPC…SVQH), 1243 to 1266 (YSEM…SSSN), and 1280 to 1343 (PRYP…KDRP). Phosphoserine is present on Ser1209. Residues 1217–1227 (GSQSLSPSVQH) show a composition bias toward polar residues. A compositionally biased stretch (low complexity) spans 1252-1266 (SNSLPSSARLGSSSN). Position 1263 is a phosphoserine (Ser1263). Over residues 1292 to 1324 (GSLSHSECSTPPRSPLNIDTLSSCSQPQTTAST) the composition is skewed to polar residues. Ser1334 is subject to Phosphoserine. A PDZ 3 domain is found at 1350-1429 (HVKVQKGSEP…TITILAQYNP (80 aa)). Composition is skewed to polar residues over residues 1434-1443 (LNSHSRSSSH), 1450-1460 (PHSTLQGSSAG), and 1483-1495 (AKQS…SVGD). The disordered stretch occupies residues 1434–1501 (LNSHSRSSSH…SVGDTTKKTP (68 aa)). Residues 1504 to 1585 (RIVFIKKSQL…SLRLKVQYRH (82 aa)) enclose the PDZ 4 domain. One can recognise an SH3 domain in the interval 1596–1664 (GDSFYIRALY…PSKYVMDQEF (69 aa)). Residue Ser1669 is modified to Phosphoserine. The Guanylate kinase-like domain maps to 1724–1907 (DSVSLAYQRV…ICTQILAMVS (184 aa)).

It belongs to the MAGUK family. As to quaternary structure, interacts with MPP1. Interacts with CTNNB1 and with the third SH3 domain of SORBS3 to form a ternary complex. Interacts (via coiled-coil domain) with MARK3. Interacts (via PDZ domain 3) with STK3/MST2 and STK4/MST1. Interacts with SCRIB. Interacts with CTNB1. Interacts with SMO and (via PDZ4 or guanylate kinase-like domain) with KIF7. In terms of tissue distribution, brain (at protein level).

It is found in the cell junction. Its subcellular location is the cell membrane. It localises to the postsynaptic density. The protein localises to the cytoplasm. The protein resides in the cytoskeleton. It is found in the cilium basal body. Functionally, acts as a regulator of the Hippo signaling pathway. Negatively regulates the Hippo signaling pathway by mediating the interaction of MARK3 with STK3/4, bringing them together to promote MARK3-dependent hyperphosphorylation and inactivation of STK3 kinase activity toward LATS1. Positively regulates the Hippo signaling by mediating the interaction of SCRIB with STK4/MST1 and LATS1 which is important for the activation of the Hippo signaling pathway. Involved in regulating cell proliferation, maintenance of epithelial polarity, epithelial-mesenchymal transition (EMT), cell migration and invasion. Plays an important role in dendritic spine formation and synaptogenesis in cortical neurons; regulates synaptogenesis by enhancing the cell surface localization of N-cadherin. Acts as a positive regulator of hedgehog (Hh) signaling pathway. Plays a critical role in the early point of the SMO activity cycle by interacting with SMO at the ciliary base to induce the accumulation of KIF7 and GLI2 at the ciliary tip for GLI2 activation. The chain is Disks large homolog 5 (Dlg5) from Mus musculus (Mouse).